The chain runs to 276 residues: Large ribosomal subunit protein uL2 (276 aa).

Disordered regions lie at residues 37-59 and 224-276; these read QFQK…GGHK and VAMN…RHKR. Residues 50–59 show a composition bias toward basic residues; that stretch reads TTRHKGGGHK.

The protein belongs to the universal ribosomal protein uL2 family. In terms of assembly, part of the 50S ribosomal subunit. Forms a bridge to the 30S subunit in the 70S ribosome.

Its function is as follows. One of the primary rRNA binding proteins. Required for association of the 30S and 50S subunits to form the 70S ribosome, for tRNA binding and peptide bond formation. It has been suggested to have peptidyltransferase activity; this is somewhat controversial. Makes several contacts with the 16S rRNA in the 70S ribosome. The protein is Large ribosomal subunit protein uL2 of Ralstonia nicotianae (strain ATCC BAA-1114 / GMI1000) (Ralstonia solanacearum).